A 192-amino-acid chain; its full sequence is Aminodeoxychorismate synthase component 2 (192 aa).

The 190-residue stretch at 3-192 (SVLMIDNCDS…LANLIHRPCH (190 aa)) folds into the Glutamine amidotransferase type-1 domain. Residues C83, H170, and E172 contribute to the active site.

Monomer. Heterodimer consisting of two non-identical subunits: a glutamine amidotransferase subunit (PabA) and a aminodeoxychorismate synthase subunit (PabB).

It carries out the reaction chorismate + L-glutamine = 4-amino-4-deoxychorismate + L-glutamate. The protein operates within cofactor biosynthesis; tetrahydrofolate biosynthesis; 4-aminobenzoate from chorismate: step 1/2. Part of a heterodimeric complex that catalyzes the two-step biosynthesis of 4-amino-4-deoxychorismate (ADC), a precursor of p-aminobenzoate (PABA) and tetrahydrofolate. In the first step, a glutamine amidotransferase (PabA) generates ammonia as a substrate that, along with chorismate, is used in the second step, catalyzed by aminodeoxychorismate synthase (PabB) to produce ADC. PabA converts glutamine into glutamate only in the presence of stoichiometric amounts of PabB. The protein is Aminodeoxychorismate synthase component 2 of Streptomyces lividans.